Here is a 78-residue protein sequence, read N- to C-terminus: Small integral membrane protein 10-like protein 2A (78 aa).

This is Small integral membrane protein 10-like protein 2A from Homo sapiens (Human).